The following is a 287-amino-acid chain: Formamidopyrimidine-DNA glycosylase (287 aa).

Residue Pro2 is the Schiff-base intermediate with DNA of the active site. Glu3 acts as the Proton donor in catalysis. Catalysis depends on Lys61, which acts as the Proton donor; for beta-elimination activity. 3 residues coordinate DNA: His95, Arg115, and Arg157. The FPG-type zinc-finger motif lies at 243-277 (NVYGRADQPCRRCGTPVRREAFMNRSSYSCPRCQP). The active-site Proton donor; for delta-elimination activity is the Arg267.

This sequence belongs to the FPG family. In terms of assembly, monomer. The cofactor is Zn(2+).

It catalyses the reaction Hydrolysis of DNA containing ring-opened 7-methylguanine residues, releasing 2,6-diamino-4-hydroxy-5-(N-methyl)formamidopyrimidine.. The enzyme catalyses 2'-deoxyribonucleotide-(2'-deoxyribose 5'-phosphate)-2'-deoxyribonucleotide-DNA = a 3'-end 2'-deoxyribonucleotide-(2,3-dehydro-2,3-deoxyribose 5'-phosphate)-DNA + a 5'-end 5'-phospho-2'-deoxyribonucleoside-DNA + H(+). Its function is as follows. Involved in base excision repair of DNA damaged by oxidation or by mutagenic agents. Acts as a DNA glycosylase that recognizes and removes damaged bases. Has a preference for oxidized purines, such as 7,8-dihydro-8-oxoguanine (8-oxoG). Has AP (apurinic/apyrimidinic) lyase activity and introduces nicks in the DNA strand. Cleaves the DNA backbone by beta-delta elimination to generate a single-strand break at the site of the removed base with both 3'- and 5'-phosphates. This is Formamidopyrimidine-DNA glycosylase from Salinispora arenicola (strain CNS-205).